The chain runs to 201 residues: MSGVNDIRSTFLDYFKKNGHEIVPSSPLVPRNDPTLMFTNAGMVQFKNVFTGLEKRSYSTATTSQKCVRVGGKHNDLDNVGYTARHLTFFEMLGNFSFGDYFKENAIELAWKLVTEGFDLPKHRLLVTVYSEDEEAATLWKKIAGFSDDKIIRISTSDNFWQMGDTGPCGPCSEIFIDQGENVWGGPPGSPEEDGDRFLEF.

It belongs to the class-II aminoacyl-tRNA synthetase family. Zn(2+) is required as a cofactor.

The protein localises to the cytoplasm. It carries out the reaction tRNA(Ala) + L-alanine + ATP = L-alanyl-tRNA(Ala) + AMP + diphosphate. Its function is as follows. Catalyzes the attachment of alanine to tRNA(Ala) in a two-step reaction: alanine is first activated by ATP to form Ala-AMP and then transferred to the acceptor end of tRNA(Ala). Also edits incorrectly charged Ser-tRNA(Ala) and Gly-tRNA(Ala) via its editing domain. The polypeptide is Alanine--tRNA ligase (alaS) (Rhizobium leguminosarum bv. viciae).